Here is a 77-residue protein sequence, read N- to C-terminus: Fungal protease inhibitor F (77 aa).

Residues 1–22 (MASKNLFVLFFIFALFAANIAA) form the signal peptide. Cystine bridges form between cysteine 25-cysteine 57, cysteine 36-cysteine 49, cysteine 40-cysteine 77, and cysteine 59-cysteine 71.

It belongs to the protease inhibitor I40 family. In terms of tissue distribution, hemolymph.

It localises to the secreted. Its function is as follows. Highly specific for fungal protease and subtilisin. This is Fungal protease inhibitor F from Bombyx mori (Silk moth).